The chain runs to 366 residues: Growth hormone secretagogue receptor type 1 (366 aa).

Residues 1–40 lie on the Extracellular side of the membrane; sequence MWNATPSEEPGPNLTLPDLGWDAPPENDSLVEELLPLFPT. N-linked (GlcNAc...) asparagine glycans are attached at residues Asn-13 and Asn-27. A helical membrane pass occupies residues 41–66; the sequence is PLLAGVTATCVALFVVGIAGNLLTML. Residues 67 to 72 lie on the Cytoplasmic side of the membrane; sequence VVSRFR. A helical transmembrane segment spans residues 73 to 96; it reads EMRTTTNLYLSSMAFSDLLIFLCM. Residues 97–117 lie on the Extracellular side of the membrane; that stretch reads PLDLFRLWQYRPWNLGNLLCK. Cys-116 and Cys-198 are joined by a disulfide. A helical transmembrane segment spans residues 118-139; sequence LFQFVSESCTYATVLTITALSV. Residues 140–162 lie on the Cytoplasmic side of the membrane; the sequence is ERYFAICFPLRAKVVVTKGRVKL. A helical membrane pass occupies residues 163–183; that stretch reads VILVIWAVAFCSAGPIFVLVG. Residues 184–211 are Extracellular-facing; the sequence is VEHDNGTDPRDTNECRATEFAVRSGLLT. Residues 212–235 form a helical membrane-spanning segment; the sequence is VMVWVSSVFFFLPVFCLTVLYSLI. Residues 236 to 263 are Cytoplasmic-facing; the sequence is GRKLWRRKRGEAAVGSSLRDQNHKQTVK. The helical transmembrane segment at 264–285 threads the bilayer; sequence MLAVVVFAFILCWLPFHVGRYL. Residues 286–302 lie on the Extracellular side of the membrane; the sequence is FSKSLEPGSVEIAQISQ. Residues 303-326 traverse the membrane as a helical segment; the sequence is YCNLVSFVLFYLSAAINPILYNIM. The Cytoplasmic segment spans residues 327 to 366; sequence SKKYRVAVFKLLGFEPFSQRKLSTLKDESSRAWTESSINT.

Belongs to the G-protein coupled receptor 1 family. As to expression, pituitary and hypothalamus.

It localises to the cell membrane. Functionally, receptor for ghrelin, coupled to G-alpha-11 proteins. Stimulates growth hormone secretion. Also binds other growth hormone releasing peptides (GHRP) (e.g. Met-enkephalin and GHRP-6) as well as non-peptide, low molecular weight secretagogues (e.g. L-692,429, MK-0677, adenosine). The chain is Growth hormone secretagogue receptor type 1 (GHSR) from Sus scrofa (Pig).